A 344-amino-acid chain; its full sequence is Meiotic recombination protein DMC1 homolog A (344 aa).

133–140 (GEFRSGKT) is a binding site for ATP. Arg235 provides a ligand contact to dsDNA. SsDNA is bound by residues Arg235, Phe238, Arg241, Arg247, and Arg315. Positions 241 and 247 each coordinate dsDNA.

This sequence belongs to the RecA family. DMC1 subfamily. In terms of tissue distribution, expressed in pollen mother cells and root tips.

Its subcellular location is the nucleus. Recombinase that may participate in meiotic recombination, specifically in homologous strand assimilation, which is required for the resolution of meiotic double-strand breaks. Exhibits DNA-dependent ATPase activity when bound to single-stranded DNA (ssDNA). Mediates renaturation of homologous complementary strands as well as assimilation of single strands into homologous supercoiled duplexes leading to D-loop formation. Binds circular single-stranded DNA (ssDNA) and circular double-stranded DNA (dsDNA) in vitro. Catalyzes DNA homologous renaturation and DNA strand exchange. The rates of these activities are dependent on the state of ATP hydrolysis. Forms helical filaments along ssDNA and dsDNA, and promotes strand exchange between ssDNA and dsDNA with long DNA substrates of several thousand base pairs. The presence of the replication protein A is not required for this activity. Seems to be required for homologous pairing and subsequent chromosome segregation during male meiosis. May be not directly required for homologous pairing during male meiosis. Required for synaptonemal complex assembly and crossover formation. Functions redundantly with DMC1B. The protein is Meiotic recombination protein DMC1 homolog A of Oryza sativa subsp. indica (Rice).